The following is a 304-amino-acid chain: MYYGFDMGGTKIELGVFDENLQRIWHKRVPTPCEDYPQLLQILRDLTEEADTYCGVQGSVGIGIPGLPNADDGTVFTANVPSAMGQPLQADLSRLIQREVRIDNDANCFALSEAWDPEFRTYPTVLGLILGTGVGGGLIVNGSIVSGRNHITGEFGHFRLPVDALDILGADIPRVPCGCGHRGCIENYISGRGFEWMYSHFYQHTLPATDIIAHYAAGEPKAVAHVERFMDVLAVCLGNLLTMLDPHLVVVGGGLSNFEKIYQELPKRLPAHLLRVARLPRIEKARYGDSGGVRGAAFLHLAEK.

ATP-binding positions include 4–11 (GFDMGGTK) and 133–140 (GVGGGLIV). Zn(2+) contacts are provided by histidine 157, cysteine 177, cysteine 179, and cysteine 184.

Belongs to the ROK (NagC/XylR) family. NagK subfamily.

It carries out the reaction N-acetyl-D-glucosamine + ATP = N-acetyl-D-glucosamine 6-phosphate + ADP + H(+). Its pathway is cell wall biogenesis; peptidoglycan recycling. In terms of biological role, catalyzes the phosphorylation of N-acetyl-D-glucosamine (GlcNAc) derived from cell-wall degradation, yielding GlcNAc-6-P. In Yersinia pseudotuberculosis serotype O:3 (strain YPIII), this protein is N-acetyl-D-glucosamine kinase.